Consider the following 859-residue polypeptide: Autoinducer 2 sensor kinase/phosphatase LuxQ (859 aa).

2 helical membrane passes run 15-35 (ATLI…GIFI) and 280-300 (IQHI…ALMS). Positions 489–711 (KMSHEIRTPI…TFVITLPVKD (223 aa)) constitute a Histidine kinase domain. Phosphohistidine; by autocatalysis is present on histidine 492. The Response regulatory domain maps to 736–851 (KVLLVEDNHT…ALHEAFVDFK (116 aa)). Aspartate 785 carries the post-translational modification 4-aspartylphosphate.

Binds the complex formed by AI-2 and LuxP.

The protein localises to the cell inner membrane. It catalyses the reaction ATP + protein L-histidine = ADP + protein N-phospho-L-histidine.. In terms of biological role, at low cell density, in absence of AI-2 (autoinducer 2), LuxQ has a kinase activity and autophosphorylates on a histidine residue. The phosphoryl group is then transferred to an aspartate residue in the response regulator domain. The phosphoryl group is transferred to LuxU, and ultimately to LuxO. At high cell density, in the presence of AI-2, the kinase activity is inactivated, and the response regulator domain has a phosphatase activity. In Vibrio harveyi (Beneckea harveyi), this protein is Autoinducer 2 sensor kinase/phosphatase LuxQ (luxQ).